Here is a 484-residue protein sequence, read N- to C-terminus: Ubiquinone biosynthesis monooxygenase COQ6, mitochondrial (484 aa).

Residues 1 to 41 (MLSLAKAKLAVVGIGRQCVAVRTLNGARAVHRSFSSSEHDQ) constitute a mitochondrion transit peptide.

This sequence belongs to the UbiH/COQ6 family. In terms of assembly, component of a multi-subunit COQ enzyme complex, composed of at least coq3, coq4, coq5, coq6, coq7 and coq9. Interacts with coq8b and coq7. FAD serves as cofactor.

It localises to the mitochondrion inner membrane. It is found in the golgi apparatus. Its subcellular location is the cell projection. The enzyme catalyses a 4-hydroxy-3-(all-trans-polyprenyl)benzoate + 2 reduced [2Fe-2S]-[ferredoxin] + O2 + 2 H(+) = a 3,4-dihydroxy-5-(all-trans-polyprenyl)benzoate + 2 oxidized [2Fe-2S]-[ferredoxin] + H2O. It catalyses the reaction a 2-methoxy-6-(all-trans-polyprenyl)phenol + 2 reduced [2Fe-2S]-[ferredoxin] + O2 + 2 H(+) = a 2-methoxy-6-(all-trans-polyprenyl)benzene-1,4-diol + 2 oxidized [2Fe-2S]-[ferredoxin] + H2O. It functions in the pathway cofactor biosynthesis; ubiquinone biosynthesis. Functionally, FAD-dependent monooxygenase required for two non-consecutive steps during ubiquinone biosynthesis. Required for the C5-ring hydroxylation during ubiquinone biosynthesis by catalyzing the hydroxylation of 4-hydroxy-3-(all-trans-polyprenyl)benzoic acid to 3,4-dihydroxy-5-(all-trans-polyprenyl)benzoic acid. Also acts downstream of coq4, for the C1-hydroxylation during ubiquinone biosynthesis by catalyzing the hydroxylation of 2-methoxy-6-(all-trans-polyprenyl)phenol to 2-methoxy-6-(all-trans-polyprenyl)benzene-1,4-diol. The electrons required for the hydroxylation reaction are funneled indirectly to coq6 from NADPH via a ferredoxin/ferredoxin reductase system. The chain is Ubiquinone biosynthesis monooxygenase COQ6, mitochondrial from Danio rerio (Zebrafish).